The following is a 204-amino-acid chain: MNPVVCAFGVIFVVVTLELVVAHPGKDVLGCHNGTSITVDECCAIPMLANKTVIEKCKAAHPFKPPQNTDDKGPRGHPGECIAECIMKGMGALKNEKVDGPAFRKAIEPVVKANPAFAKLLDDTVKQCHESINVDSEFTRYVTKPVCKADAKAFINCVYGTLFEQCPTNVWTQKDGCTQLKDKIKKGCAYFALRKHGGRRMRPT.

Positions 1–22 (MNPVVCAFGVIFVVVTLELVVA) are cleaved as a signal peptide. Disulfide bonds link C57/C85, C81/C147, and C128/C157.

The protein belongs to the PBP/GOBP family.

It localises to the secreted. Its function is as follows. Present in the aqueous fluid surrounding olfactory sensory dendrites and are thought to aid in the capture and transport of hydrophobic odorants into and through this fluid. The protein is General odorant-binding protein 67 (Obp67) of Anopheles gambiae (African malaria mosquito).